The chain runs to 642 residues: MASTSIMLSSFFSFFFLTFFVTYAQQNVTVHTICYYDGGNFTSNTSYSLNLNRLISSLPDLTPTINGFYNISINGEVNAIALCRGDVKPNQDCISCITTAAKQLVESCPNIIEANIWLEKCMFRYTSRIILGQMEPVPFSYTSSNVSVTDKEGFSKGLGDLLDSLGAKIDAANETKEVKFAAGVKGTIYALAQCTPDLSESDCRICLAQIFAGVPTCCDGKTGGWWTNPSCYFRFEVYPFFDLSVTSEQKQPLSSHNNNTRRSDQGKSKDRSKTLIFAVVPIVAIILGLVFLFIYLKRRRKKKTLKENAENEFESTDSLHFDFETIRVATDDFSLTNKIGEGGFGVVYKGHLPDGLEIAVKRLSIHSGQGNAEFKTEVLLMTKLQHKNLVKLFGFSIKESERLLVYEFIPNTSLDRFLFDPIKQKQLDWEKRYNIIVGVSRGLLYLHEGSEFPIIHRDLKSSNVLLDEQMLPKISDFGMARQFDFDNTQAVTRRVVGTYGYMAPEYAMHGRFSVKTDVYSFGVLVLEIITGKRNSGLGLGEGTDLPTFAWQNWIEGTSMELIDPVLLQTHDKKESMQCLEIALSCVQENPTKRPTMDSVVSMLSSDSESRQLPKPSQPGFFRRSASFSISLNDVSLTDLSAR.

Positions 1-24 (MASTSIMLSSFFSFFFLTFFVTYA) are cleaved as a signal peptide. Over 25-274 (QQNVTVHTIC…QGKSKDRSKT (250 aa)) the chain is Extracellular. N-linked (GlcNAc...) asparagine glycans are attached at residues N27, N40, N44, N70, N145, N173, and N258. Gnk2-homologous domains follow at residues 29–130 (TVHT…SRII) and 136–240 (PVPF…VYPF). The chain crosses the membrane as a helical span at residues 275-295 (LIFAVVPIVAIILGLVFLFIY). The Cytoplasmic portion of the chain corresponds to 296–642 (LKRRRKKKTL…DVSLTDLSAR (347 aa)). Residues 333-620 (FSLTNKIGEG…QLPKPSQPGF (288 aa)) form the Protein kinase domain. Residues 339–347 (IGEGGFGVV) and K361 contribute to the ATP site. Residue Y406 is modified to Phosphotyrosine. The active-site Proton acceptor is D458. At S462 the chain carries Phosphoserine. Phosphothreonine is present on T498. Residue Y506 is modified to Phosphotyrosine.

This sequence belongs to the protein kinase superfamily. Ser/Thr protein kinase family. CRK subfamily.

It localises to the membrane. The catalysed reaction is L-seryl-[protein] + ATP = O-phospho-L-seryl-[protein] + ADP + H(+). It catalyses the reaction L-threonyl-[protein] + ATP = O-phospho-L-threonyl-[protein] + ADP + H(+). In Arabidopsis thaliana (Mouse-ear cress), this protein is Cysteine-rich receptor-like protein kinase 27 (CRK27).